Reading from the N-terminus, the 244-residue chain is Ubiquinone/menaquinone biosynthesis C-methyltransferase UbiE (244 aa).

S-adenosyl-L-methionine is bound by residues T70, D91, and 117–118; that span reads DA.

This sequence belongs to the class I-like SAM-binding methyltransferase superfamily. MenG/UbiE family.

It catalyses the reaction a 2-demethylmenaquinol + S-adenosyl-L-methionine = a menaquinol + S-adenosyl-L-homocysteine + H(+). It carries out the reaction a 2-methoxy-6-(all-trans-polyprenyl)benzene-1,4-diol + S-adenosyl-L-methionine = a 5-methoxy-2-methyl-3-(all-trans-polyprenyl)benzene-1,4-diol + S-adenosyl-L-homocysteine + H(+). Its pathway is quinol/quinone metabolism; menaquinone biosynthesis; menaquinol from 1,4-dihydroxy-2-naphthoate: step 2/2. The protein operates within cofactor biosynthesis; ubiquinone biosynthesis. In terms of biological role, methyltransferase required for the conversion of demethylmenaquinol (DMKH2) to menaquinol (MKH2) and the conversion of 2-polyprenyl-6-methoxy-1,4-benzoquinol (DDMQH2) to 2-polyprenyl-3-methyl-6-methoxy-1,4-benzoquinol (DMQH2). This is Ubiquinone/menaquinone biosynthesis C-methyltransferase UbiE from Laribacter hongkongensis (strain HLHK9).